The following is a 469-amino-acid chain: Protein translocase subunit SecY (469 aa).

At 1 to 20 the chain is on the cytoplasmic side; it reads MSFIDSLATLGQYLPAVTKP. The helical transmembrane segment at 21–47 threads the bilayer; sequence KEKPSLGQKLVWSLVAVIIYLIMASTP. The Extracellular portion of the chain corresponds to 48–59; that stretch reads LYGITSASFFKN. Positions 60–67 form an intramembrane region, helical; it reads LILEQIIF. The discontinuously helical transmembrane segment at 60–88 threads the bilayer; sequence LILEQIIFASTTGTLAQLGIGPIITAGLI. The stretch at 68-79 is an intramembrane region; that stretch reads ASTTGTLAQLGI. The segment at residues 80 to 88 is an intramembrane region (helical); it reads GPIITAGLI. Residues 89–109 are Cytoplasmic-facing; sequence MQILAGSKLISIDLNDPDDRV. Residues 110–131 traverse the membrane as a helical segment; the sequence is KFTEAQKGLAFIFILVESALFG. Residues 132-146 lie on the Extracellular side of the membrane; that stretch reads YVLARTSTTINASIL. A helical transmembrane segment spans residues 147–171; sequence FIAGIVIAQLIVATYLILLLDELIQ. The Cytoplasmic portion of the chain corresponds to 172 to 178; that stretch reads KGWGLGS. A helical transmembrane segment spans residues 179 to 197; sequence GVSLFILAGVMKIMFWDMF. The Extracellular portion of the chain corresponds to 198–240; the sequence is GIASVSSQNLPIGFFPALFTALASHSDVLNLIVNTSTKNLFQP. A helical transmembrane segment spans residues 241 to 262; that stretch reads DLVGLVTTIALIIITIYLTTMT. At 263–287 the chain is on the cytoplasmic side; the sequence is IEIPVTSQKLRGIRRTIPLNFLYVS. A helical membrane pass occupies residues 288 to 309; sequence SIPVIFVAVLGSDIQLFASLAS. Over 310–347 the chain is Extracellular; it reads YVSPSASNILNTVSGVFFFPPPNSAIPHSIYAVVLDPL. Residues 348–367 traverse the membrane as a helical segment; it reads GALEYAVVFIVLSILFGILW. Residues 368 to 410 lie on the Cytoplasmic side of the membrane; it reads VDVAGLDPATQAQQLVEAGIEIPGVRNNPKIIEGILARYIYPL. The chain crosses the membrane as a helical span at residues 411-429; that stretch reads AFFSSIIVGLIAVFATLLG. Residues 430 to 432 lie on the Extracellular side of the membrane; that stretch reads AYG. A helical transmembrane segment spans residues 433–447; that stretch reads TGIGILLAVTIAIQY. Topologically, residues 448 to 469 are cytoplasmic; it reads YSLLAYERSLEMYPLLKRLIGE.

The protein belongs to the SecY/SEC61-alpha family. Component of the Sec protein translocase complex. Heterotrimer consisting of alpha (SecY), beta (SecG) and gamma (SecE) subunits. The heterotrimers can form oligomers, although 1 heterotrimer is thought to be able to translocate proteins. Interacts with the ribosome. May interact with SecDF, and other proteins may be involved.

Its subcellular location is the cell membrane. The central subunit of the protein translocation channel SecYEG. Consists of two halves formed by TMs 1-5 and 6-10. These two domains form a lateral gate at the front which open onto the bilayer between TMs 2 and 7, and are clamped together by SecE at the back. The channel is closed by both a pore ring composed of hydrophobic SecY resides and a short helix (helix 2A) on the extracellular side of the membrane which forms a plug. The plug probably moves laterally to allow the channel to open. The ring and the pore may move independently. This is Protein translocase subunit SecY from Saccharolobus solfataricus (strain ATCC 35092 / DSM 1617 / JCM 11322 / P2) (Sulfolobus solfataricus).